Reading from the N-terminus, the 681-residue chain is Sodium/glucose cotransporter 4 (681 aa).

Residues 1-36 are Extracellular-facing; the sequence is MSKELAAMGPGASGDGVRTETAPHIALDSRVGLHAY. Residues 37 to 57 traverse the membrane as a helical segment; it reads DISVVVIYFVFVIAVGIWSSI. Residues 58–75 lie on the Cytoplasmic side of the membrane; sequence RASRGTIGGYFLAGRSMS. A helical transmembrane segment spans residues 76-98; that stretch reads WWPIGASLMSSNVGSGLFIGLAG. Residues 99–114 are Extracellular-facing; that stretch reads TGAAGGLAVGGFEWNA. A helical transmembrane segment spans residues 115 to 135; that stretch reads TWLLLALGWVFVPVYIAAGVV. The Cytoplasmic segment spans residues 136-157; that stretch reads TMPQYLKKRFGGQRIQVYMSVL. The helical transmembrane segment at 158-178 threads the bilayer; the sequence is SLILYIFTKISTDIFSGALFI. At 179–190 the chain is on the extracellular side; that stretch reads QMALGWNLYLST. The chain crosses the membrane as a helical span at residues 191 to 211; that stretch reads GILLVVTAVYTIAGGLMAVIY. Residues 212 to 217 are Cytoplasmic-facing; it reads TDALQT. Residues 218-238 traverse the membrane as a helical segment; that stretch reads VIMVGGALVLMFLGFQDVGWY. The Extracellular portion of the chain corresponds to 239–275; that stretch reads PGLEQRYRQAIPNVTVPNTTCHLPRPDAFHILRDPVS. Asparagine 251 carries N-linked (GlcNAc...) asparagine glycosylation. The chain crosses the membrane as a helical span at residues 276–296; the sequence is GDIPWPGLIFGLTVLATWCWC. Topologically, residues 297 to 317 are cytoplasmic; it reads TDQVIVQRSLSAKSLSHAKGG. Residues 318–338 form a helical membrane-spanning segment; the sequence is SVLGGYLKILPMFFIVMPGMI. Residues 339 to 383 are Extracellular-facing; the sequence is SRALFPDEVGCVDPDVCQRICGARVGCSNIAYPKLVMALMPVGLR. The chain crosses the membrane as a helical span at residues 384–406; sequence GLMIAVIMAALMSSLTSIFNSSS. Residues 407-427 lie on the Cytoplasmic side of the membrane; that stretch reads TLFTIDVWQRFRRKSTEQELM. A helical transmembrane segment spans residues 428–448; the sequence is VVGRVFVVFLVVISILWIPII. The Extracellular segment spans residues 449–459; that stretch reads QSSNSGQLFDY. Residues 460 to 480 traverse the membrane as a helical segment; that stretch reads IQAVTSYLAPPITALFLLAIF. Topologically, residues 481-487 are cytoplasmic; that stretch reads CKRVTEP. Residues 488–508 traverse the membrane as a helical segment; that stretch reads GAFWGLVFGLGVGLLRMILEF. Residues 509–530 are Extracellular-facing; it reads SYPAPACGEVDRRPAVLKDFHY. Residues 531 to 551 traverse the membrane as a helical segment; the sequence is LYFAILLCGLTAIVIVIVSLC. Over 552–660 the chain is Cytoplasmic; it reads TTPIPEEQLT…SIEEEPLWRH (109 aa). Over residues 579-591 the composition is skewed to basic and acidic residues; that stretch reads AHESTPEISERPA. Positions 579–614 are disordered; that stretch reads AHESTPEISERPAGECPAGGGAAENSSLGQEQPEAP. Phosphoserine is present on residues serine 604 and serine 605. Residues 661–681 traverse the membrane as a helical segment; that stretch reads VCNINAVLLLAINIFLWGYFA.

This sequence belongs to the sodium:solute symporter (SSF) (TC 2.A.21) family. As to expression, expressed in the small intestine, kidney and liver.

It localises to the cell membrane. The catalysed reaction is D-mannose(out) + n Na(+)(out) = D-mannose(in) + n Na(+)(in). Its function is as follows. Electrogenic Na(+)-coupled sugar symporter that may play a primary role in D-mannose and possibly D-fructose and D-glucose transport at the plasma membrane. Transporter activity is driven by a transmembrane Na(+) electrochemical gradient set by the Na(+)/K(+) pump. Exclusively recognizes sugar substrates having a pyranose ring with an axial hydroxyl group on carbon 2. This is Sodium/glucose cotransporter 4 from Homo sapiens (Human).